We begin with the raw amino-acid sequence, 252 residues long: Ribonuclease 3 (252 aa).

An RNase III domain is found at 3-125 (LATLETRLDH…IFGAAFLDGG (123 aa)). Mg(2+) is bound at residue glutamate 38. The active site involves aspartate 42. Mg(2+)-binding residues include aspartate 111 and glutamate 114. Glutamate 114 is a catalytic residue. The region spanning 152-222 (DAKTLLQEFL…AKLALEAAQA (71 aa)) is the DRBM domain.

This sequence belongs to the ribonuclease III family. As to quaternary structure, homodimer. It depends on Mg(2+) as a cofactor.

It localises to the cytoplasm. The enzyme catalyses Endonucleolytic cleavage to 5'-phosphomonoester.. Its function is as follows. Digests double-stranded RNA. Involved in the processing of primary rRNA transcript to yield the immediate precursors to the large and small rRNAs (23S and 16S). Processes some mRNAs, and tRNAs when they are encoded in the rRNA operon. Processes pre-crRNA and tracrRNA of type II CRISPR loci if present in the organism. The sequence is that of Ribonuclease 3 from Bordetella petrii (strain ATCC BAA-461 / DSM 12804 / CCUG 43448).